The sequence spans 399 residues: Protein LIGULELESS 1 (399 aa).

The tract at residues 1–28 is disordered; the sequence is MMNLSAAANGRDEFPPYVVPSNAAAPPP. Residues 15 to 24 are compositionally biased toward low complexity; that stretch reads PPYVVPSNAA. An SBP-type zinc finger spans residues 182-260; it reads PPRCQAEGCK…ADHNRRRRKS (79 aa). Residues Cys-185, Cys-190, Cys-207, His-210, Cys-227, Cys-230, His-234, and Cys-246 each coordinate Zn(2+). Positions 243-259 match the Bipartite nuclear localization signal motif; the sequence is KKSCRKRLADHNRRRRK. The tract at residues 250 to 292 is disordered; sequence LADHNRRRRKSKPSDADAGDKKRAHANKAAAAKDKAESSSKNM. Positions 261–270 are enriched in basic and acidic residues; that stretch reads KPSDADAGDK.

In terms of tissue distribution, leaf ligular region, blade and sheath.

It is found in the nucleus. Functionally, involved in the formation of ligules and auricles during leaf organogenesis. This is Protein LIGULELESS 1 (LG1) from Zea mays (Maize).